The sequence spans 173 residues: Coordinator of PRMT5 and differentiation stimulator (173 aa).

The residue at position 1 (Met-1) is an N-acetylmethionine. The disordered stretch occupies residues 1-70 (MDPQAATGRG…EGPSSEEEGF (70 aa)). Phosphoserine occurs at positions 64 and 65.

As to quaternary structure, interacts with PRMT5. Interacts with histone H4; specifically interacts with the N-terminus of histone H4 but not with histone H3. Interacts with CBFB. Found in a complex with PRMT5, RUNX1 and CBFB.

The protein resides in the nucleus. Functionally, histone-binding protein required for histone H4 methyltransferase activity of PRMT5. Specifically required for histone H4 'Arg-3' methylation mediated by PRMT5, but not histone H3 'Arg-8' methylation, suggesting that it modulates the substrate specificity of PRMT5. Specifically interacts with the N-terminus of histone H4 but not with histone H3, suggesting that it acts by promoting the association between histone H4 and PRMT5. Involved in CCNE1 promoter repression. Plays a role in muscle cell differentiation by modulating the recruitment of PRMT5 to the promoter of genes involved in the coordination between cell cycle exit and muscle differentiation. This Mus musculus (Mouse) protein is Coordinator of PRMT5 and differentiation stimulator (Coprs).